We begin with the raw amino-acid sequence, 30 residues long: Phospholipase A2 acanmyotoxin-2 (30 aa).

Ca(2+)-binding residues include Tyr-28 and Gly-30.

The cofactor is Ca(2+). In terms of processing, contains seven disulfide bonds. Expressed by the venom gland.

It localises to the secreted. It carries out the reaction a 1,2-diacyl-sn-glycero-3-phosphocholine + H2O = a 1-acyl-sn-glycero-3-phosphocholine + a fatty acid + H(+). Snake venom phospholipase A2 (PLA2) that has myotoxic activity but no significant neurotoxicity. PLA2 catalyzes the calcium-dependent hydrolysis of the 2-acyl groups in 3-sn-phosphoglycerides. The polypeptide is Phospholipase A2 acanmyotoxin-2 (Acanthophis sp. (strain Seram) (Seram death adder)).